The sequence spans 119 residues: Large ribosomal subunit protein bL20 (119 aa).

The protein belongs to the bacterial ribosomal protein bL20 family.

In terms of biological role, binds directly to 23S ribosomal RNA and is necessary for the in vitro assembly process of the 50S ribosomal subunit. It is not involved in the protein synthesizing functions of that subunit. The protein is Large ribosomal subunit protein bL20 of Dechloromonas aromatica (strain RCB).